The primary structure comprises 329 residues: Glycerol-3-phosphate dehydrogenase [NAD(P)+] (329 aa).

Positions 15, 35, and 107 each coordinate NADPH. K107, G135, and S137 together coordinate sn-glycerol 3-phosphate. Residue A139 participates in NADPH binding. 5 residues coordinate sn-glycerol 3-phosphate: K190, D243, S253, R254, and N255. The active-site Proton acceptor is K190. R254 contributes to the NADPH binding site. Residues L276 and E278 each contribute to the NADPH site.

The protein belongs to the NAD-dependent glycerol-3-phosphate dehydrogenase family.

It is found in the cytoplasm. The catalysed reaction is sn-glycerol 3-phosphate + NAD(+) = dihydroxyacetone phosphate + NADH + H(+). It carries out the reaction sn-glycerol 3-phosphate + NADP(+) = dihydroxyacetone phosphate + NADPH + H(+). The protein operates within membrane lipid metabolism; glycerophospholipid metabolism. Its function is as follows. Catalyzes the reduction of the glycolytic intermediate dihydroxyacetone phosphate (DHAP) to sn-glycerol 3-phosphate (G3P), the key precursor for phospholipid synthesis. The protein is Glycerol-3-phosphate dehydrogenase [NAD(P)+] of Rhodopseudomonas palustris (strain HaA2).